Reading from the N-terminus, the 535-residue chain is Unconventional prefoldin RPB5 interactor 1 (535 aa).

M1 carries the N-acetylmethionine modification. Disordered regions lie at residues 1-23, 223-330, 352-383, and 412-431; these read MEAP…PALV, LLGE…VGDN, KNTT…QELP, and SRSR…AAEF. Pro residues predominate over residues 7–18; that stretch reads ETPPDPSPPSAP. 2 stretches are compositionally biased toward polar residues: residues 253-265 and 276-296; these read TNVN…TDSH and EPFS…SSSY. Residues 299–320 show a composition bias toward acidic residues; sequence DDDDDDDDDDDDDNIDDDDGDN. S372 is subject to Phosphoserine; by RPS6KB1. At T373 the chain carries Phosphothreonine. The segment covering 417–427 has biased composition (polar residues); the sequence is NSVCSDTSESS. S442 is modified (phosphoserine).

This sequence belongs to the RNA polymerase II subunit 5-mediating protein family. Homodimer. Component of the PAQosome complex which is responsible for the biogenesis of several protein complexes and which consists of R2TP complex members RUVBL1, RUVBL2, RPAP3 and PIH1D1, URI complex members PFDN2, PFDN6, PDRG1, UXT and URI1 as well as ASDURF, POLR2E and DNAAF10/WDR92. Interacts with POLR2E/RPB5, RUVBL2 and RUVBL1. Interacts with PFDN2, PFDN4 and STAP1; the interactions are phosphorylation-dependent and occur in a growth-dependent manner in the mitochondrion. Interacts with UXT. Interacts with PPP1CC; the interaction is phosphorylation-dependent and occurs in a growth factor-dependent manner. Interacts (via the middle C-terminal region) with GTF2F1 and GTF2F2. Interacts with DMAP1. Interacts with TSC1 and TSC2. Interacts with PRPF8 and EFTUD2 in a ZNHIT2-dependent manner. In terms of processing, phosphorylated. Phosphorylation occurs essentially on serine residues. Phosphorylation occurs in response to androgen treatment in prostate cancer cells in a mTOR-dependent manner. Phosphorylated; hyperhosphorylated in mitochondria in a mTORC-dependent signaling pathway. Phosphorylated at Ser-372 by RPS6KB1 in a growth factor- and rapamycin-dependent manner. S6K1-mediated mitochondrial phosphorylation at Ser-372 disrupts the URI1-PPP1CC complex in the mitochondrion, relieves PPP1CC phosphatase inhibition activity and hence engages a negative feedback diminishing RPS6KB1 kinase activity, preventing sustained S6K1-dependent signaling. In terms of tissue distribution, ubiquitous. Expressed in ovarian cancers (at protein level). Expressed strongly in skeletal muscle. Expressed weakly in brain, heart, pancreas and in prostate epithelial cells.

The protein localises to the nucleus. The protein resides in the cytoplasm. Its subcellular location is the mitochondrion. It localises to the cell projection. It is found in the dendrite. In terms of biological role, involved in gene transcription regulation. Acts as a transcriptional repressor in concert with the corepressor UXT to regulate androgen receptor (AR) transcription. May act as a tumor suppressor to repress AR-mediated gene transcription and to inhibit anchorage-independent growth in prostate cancer cells. Required for cell survival in ovarian cancer cells. Together with UXT, associates with chromatin to the NKX3-1 promoter region. Antagonizes transcriptional modulation via hepatitis B virus X protein. Plays a central role in maintaining S6K1 signaling and BAD phosphorylation under normal growth conditions thereby protecting cells from potential deleterious effects of sustained S6K1 signaling. The URI1-PPP1CC complex acts as a central component of a negative feedback mechanism that counteracts excessive S6K1 survival signaling to BAD in response to growth factors. Mediates inhibition of PPP1CC phosphatase activity in mitochondria. Coordinates the regulation of nutrient-sensitive gene expression availability in a mTOR-dependent manner. Seems to be a scaffolding protein able to assemble a prefoldin-like complex that contains PFDs and proteins with roles in transcription and ubiquitination. The sequence is that of Unconventional prefoldin RPB5 interactor 1 (URI1) from Homo sapiens (Human).